We begin with the raw amino-acid sequence, 68 residues long: Probable tautomerase jhp_0858 (68 aa).

The active-site Proton acceptor; via imino nitrogen is the Pro-2.

This sequence belongs to the 4-oxalocrotonate tautomerase family.

The sequence is that of Probable tautomerase jhp_0858 from Helicobacter pylori (strain J99 / ATCC 700824) (Campylobacter pylori J99).